The chain runs to 302 residues: Light-independent protochlorophyllide reductase iron-sulfur ATP-binding protein (302 aa).

Residues 46–51 (GIGKST) and Lys-75 contribute to the ATP site. Ser-50 lines the Mg(2+) pocket. [4Fe-4S] cluster-binding residues include Cys-131 and Cys-165. 216-217 (NR) lines the ATP pocket.

It belongs to the NifH/BchL/ChlL family. In terms of assembly, homodimer. Protochlorophyllide reductase is composed of three subunits; BchL, BchN and BchB. It depends on [4Fe-4S] cluster as a cofactor.

It catalyses the reaction chlorophyllide a + oxidized 2[4Fe-4S]-[ferredoxin] + 2 ADP + 2 phosphate = protochlorophyllide a + reduced 2[4Fe-4S]-[ferredoxin] + 2 ATP + 2 H2O. It functions in the pathway porphyrin-containing compound metabolism; bacteriochlorophyll biosynthesis (light-independent). Its function is as follows. Component of the dark-operative protochlorophyllide reductase (DPOR) that uses Mg-ATP and reduced ferredoxin to reduce ring D of protochlorophyllide (Pchlide) to form chlorophyllide a (Chlide). This reaction is light-independent. The L component serves as a unique electron donor to the NB-component of the complex, and binds Mg-ATP. The chain is Light-independent protochlorophyllide reductase iron-sulfur ATP-binding protein from Methylocella silvestris (strain DSM 15510 / CIP 108128 / LMG 27833 / NCIMB 13906 / BL2).